Reading from the N-terminus, the 157-residue chain is uncharacterized protein (157 aa).

The N-acetyltransferase domain maps to 9–147 (LLINYKTLDE…DFYVWHPEVN (139 aa)).

This is an uncharacterized protein from Bacillus cereus (strain 03BB102).